A 179-amino-acid polypeptide reads, in one-letter code: Large ribosomal subunit protein uL5c (179 aa).

Belongs to the universal ribosomal protein uL5 family. As to quaternary structure, part of the 50S ribosomal subunit; contacts the 5S rRNA.

It localises to the plastid. Binds 5S rRNA, forms part of the central protuberance of the 50S subunit. The polypeptide is Large ribosomal subunit protein uL5c (rpl5) (Euglena longa (Euglenophycean alga)).